The sequence spans 220 residues: Putative 3-methyladenine DNA glycosylase (220 aa).

Belongs to the DNA glycosylase MPG family.

The chain is Putative 3-methyladenine DNA glycosylase from Rickettsia bellii (strain RML369-C).